The following is a 161-amino-acid chain: SsrA-binding protein (161 aa).

It belongs to the SmpB family.

It is found in the cytoplasm. In terms of biological role, required for rescue of stalled ribosomes mediated by trans-translation. Binds to transfer-messenger RNA (tmRNA), required for stable association of tmRNA with ribosomes. tmRNA and SmpB together mimic tRNA shape, replacing the anticodon stem-loop with SmpB. tmRNA is encoded by the ssrA gene; the 2 termini fold to resemble tRNA(Ala) and it encodes a 'tag peptide', a short internal open reading frame. During trans-translation Ala-aminoacylated tmRNA acts like a tRNA, entering the A-site of stalled ribosomes, displacing the stalled mRNA. The ribosome then switches to translate the ORF on the tmRNA; the nascent peptide is terminated with the 'tag peptide' encoded by the tmRNA and targeted for degradation. The ribosome is freed to recommence translation, which seems to be the essential function of trans-translation. This Vesicomyosocius okutanii subsp. Calyptogena okutanii (strain HA) protein is SsrA-binding protein.